The following is a 415-amino-acid chain: Proline-serine-threonine phosphatase-interacting protein 1 (415 aa).

The 260-residue stretch at L5–D264 folds into the F-BAR domain. Coiled coils occupy residues L94–L133 and S162–A215. The residue at position 318 (S318) is a Phosphoserine. A Phosphotyrosine; by ABL1 modification is found at Y344. One can recognise an SH3 domain in the interval S358 to L415.

In terms of assembly, homodimer. Homotrimer. Interacts (via coiled-coil domain) with CD2AP, PTPN12 and PTPN18. Interacts (via SH3 domain) with ABL1 and WAS. Interacts (via SH3 and coiled-coil domains) with MEFV (via B-box zinc finger); the interaction allows binding of MEFV to PYCARD and facilitates formation of PYCARD pyroptosomes. Interacts with DNM2 and FASLG. Interacts with CD2. Dephosphorylated on Tyr-344 by PTPN18, this event negatively regulates the association of PSTPIP1 with SH2 domain-containing proteins as tyrosine kinase. Phosphorylation of Tyr-344 is probably required for subsequent phosphorylation at other tyrosine residues. Phosphorylation is induced by activation of the EGFR and PDGFR in a ABL1 dependent manner. The phosphorylation regulates the interaction with WAS and with MEFV. As to expression, highly expressed in adult lung and spleen, and weakly expressed in testis, muscle, kidney, brain and heart. Highly expressed in spleen and thymus, moderately in lung, brain and muscle, and weakly expressed in heart and liver (at protein level).

It localises to the cytoplasm. The protein resides in the perinuclear region. It is found in the cell projection. Its subcellular location is the lamellipodium. The protein localises to the cleavage furrow. It localises to the cytoskeleton. The protein resides in the cell membrane. It is found in the uropodium. Functionally, involved in regulation of the actin cytoskeleton. May regulate WAS actin-bundling activity. Bridges the interaction between ABL1 and PTPN18 leading to ABL1 dephosphorylation. May play a role as a scaffold protein between PTPN12 and WAS and allow PTPN12 to dephosphorylate WAS. Has the potential to physically couple CD2 and CD2AP to WAS. Acts downstream of CD2 and CD2AP to recruit WAS to the T-cell:APC contact site so as to promote the actin polymerization required for synapse induction during T-cell activation. Down-regulates CD2-stimulated adhesion through the coupling of PTPN12 to CD2. Also has a role in innate immunity and the inflammatory response. Recruited to inflammasomes by MEFV. Induces formation of pyroptosomes, large supramolecular structures composed of oligomerized PYCARD dimers which form prior to inflammatory apoptosis. Binding to MEFV allows MEFV to bind to PYCARD and facilitates pyroptosome formation. Regulates endocytosis and cell migration in neutrophils. The protein is Proline-serine-threonine phosphatase-interacting protein 1 (Pstpip1) of Mus musculus (Mouse).